The following is a 340-amino-acid chain: Protein-glutamate methylesterase/protein-glutamine glutaminase 1 (340 aa).

A Response regulatory domain is found at 5–122; sequence KLFIVDDSAL…KVVSELKEKI (118 aa). Asp56 bears the 4-aspartylphosphate mark. The 193-residue stretch at 148–340 folds into the CheB-type methylesterase domain; the sequence is GKNGRQLVVI…AIAEEIAANI (193 aa). Residues Ser160, His187, and Asp285 contribute to the active site.

It belongs to the CheB family. Phosphorylated by CheA. Phosphorylation of the N-terminal regulatory domain activates the methylesterase activity.

It localises to the cytoplasm. The catalysed reaction is [protein]-L-glutamate 5-O-methyl ester + H2O = L-glutamyl-[protein] + methanol + H(+). It carries out the reaction L-glutaminyl-[protein] + H2O = L-glutamyl-[protein] + NH4(+). Its function is as follows. Involved in chemotaxis. Part of a chemotaxis signal transduction system that modulates chemotaxis in response to various stimuli. Catalyzes the demethylation of specific methylglutamate residues introduced into the chemoreceptors (methyl-accepting chemotaxis proteins or MCP) by CheR. Also mediates the irreversible deamidation of specific glutamine residues to glutamic acid. This is Protein-glutamate methylesterase/protein-glutamine glutaminase 1 from Carboxydothermus hydrogenoformans (strain ATCC BAA-161 / DSM 6008 / Z-2901).